The primary structure comprises 225 residues: UPF0758 protein SEQ_1136 (225 aa).

The 123-residue stretch at 102–224 (PVLSSAQVAE…YYSFREKSDL (123 aa)) folds into the MPN domain. Residues H173, H175, and D186 each coordinate Zn(2+). Positions 173–186 (HNHPSGLTKPSAND) match the JAMM motif motif.

Belongs to the UPF0758 family.

The protein is UPF0758 protein SEQ_1136 of Streptococcus equi subsp. equi (strain 4047).